Reading from the N-terminus, the 92-residue chain is Phosphoribosyl-ATP pyrophosphatase (92 aa).

The protein belongs to the PRA-PH family.

It localises to the cytoplasm. It catalyses the reaction 1-(5-phospho-beta-D-ribosyl)-ATP + H2O = 1-(5-phospho-beta-D-ribosyl)-5'-AMP + diphosphate + H(+). The protein operates within amino-acid biosynthesis; L-histidine biosynthesis; L-histidine from 5-phospho-alpha-D-ribose 1-diphosphate: step 2/9. This Leptospira biflexa serovar Patoc (strain Patoc 1 / ATCC 23582 / Paris) protein is Phosphoribosyl-ATP pyrophosphatase.